A 239-amino-acid chain; its full sequence is 7-cyano-7-deazaguanine synthase (239 aa).

13–23 provides a ligand contact to ATP; it reads FSGGQDSTTCL. 4 residues coordinate Zn(2+): C192, C201, C204, and C207.

This sequence belongs to the QueC family. Zn(2+) is required as a cofactor.

It carries out the reaction 7-carboxy-7-deazaguanine + NH4(+) + ATP = 7-cyano-7-deazaguanine + ADP + phosphate + H2O + H(+). Its pathway is purine metabolism; 7-cyano-7-deazaguanine biosynthesis. Its function is as follows. Catalyzes the ATP-dependent conversion of 7-carboxy-7-deazaguanine (CDG) to 7-cyano-7-deazaguanine (preQ(0)). The protein is 7-cyano-7-deazaguanine synthase of Shewanella sp. (strain MR-4).